The following is a 1612-amino-acid chain: Replicase large subunit (1612 aa).

The tract at residues 52-466 (RSISEEQTLI…FLQTKLAMLK (415 aa)) is methyltransferase. Residues 72 to 280 (TFYNTQNAVH…HSYSNVLKYV (209 aa)) enclose the Alphavirus-like MT domain. The 162-residue stretch at 803–964 (LVYSDMGKIR…QLEVDAVETR (162 aa)) folds into the (+)RNA virus helicase ATP-binding domain. The tract at residues 831 to 1086 (TLVDGVPGCG…RHTRSIKYYT (256 aa)) is helicase. Position 835 to 842 (835 to 842 (GVPGCGKT)) interacts with ATP. Positions 965–1117 (RTTLRCPADI…DMYKVDVSTQ (153 aa)) constitute a (+)RNA virus helicase C-terminal domain. The 114-residue stretch at 1380-1493 (MDILELDISK…YFPKGTDFPD (114 aa)) folds into the RdRp catalytic domain.

It belongs to the ssRNA positive-strand viruses RNA-directed RNA polymerase family. In terms of assembly, heterodimer of a large and a small subunit.

The catalysed reaction is RNA(n) + a ribonucleoside 5'-triphosphate = RNA(n+1) + diphosphate. It carries out the reaction ATP + H2O = ADP + phosphate + H(+). Is an RNA-dependent RNA polymerase active in viral RNA replication. Functionally, is a methyltransferase active in RNA capping and an RNA helicase. Methyltransferase displays a cytoplasmic capping enzyme activity. This function is necessary since all viral RNAs are synthesized in the cytoplasm, and host capping enzymes are restricted to the nucleus. Helicase region probably exhibits NTPase and RNA unwinding activities (Potential). It also acts as a suppressor of RNA-mediated gene silencing, also known as post-transcriptional gene silencing (PTGS), a mechanism of plant viral defense that limits the accumulation of viral RNAs. May mediate silencing suppression through either inhibition of HEN1-mediated siRNA or siRNA demethylation. The sequence is that of Replicase large subunit from Pepper mild mottle virus (strain Spain) (PMMV-S).